Consider the following 612-residue polypeptide: MSAELIAVYKDEQIIDLESAKVLGLSDGIKALNGTEPIYFDDSPLALEVIRHSCAHLLAQSLKALYPDAKFFVGPVVEEGFYYDFKTASKISEEDLPKIEAKMKEFAKLKLAITKETLTREQALERFKGDELKHAVMSKISGDAFGVYQQGEFEDLCKGPHLPNTRFLNHFKLTKLAGAYLGGDENNEMLIRIYGIAFATKEGLKDYLFQIEEAKKRDHRKLGVELGLFSFDDEIGAGLPLWLPKGARLRKRIEDLLSQALLLRGYEPVKGPEILKSDVWKISGHYDNYKENMYFTTIDEQEYGIKPMNCVGHIKVYQSALHSYRDLPLRFYEYGVVHRHEKSGVLHGLLRVREFTQDDAHIFCSFEQIQSEVSAILDFTHKIMQAFDFSYEMELSTRPAKSIGDDEVWEKATSALKEALKEHRIDYKIDEGGGAFYGPKIDIKITDALKRKWQCGTIQVDMNLPERFKLAFTNERNHAEQPVMIHRAILGSFERFIAILSEHFGGNFPFFVAPTQIALIPINEEHHVFALKLKEVLKKRDIFVEVLDKNDSLNKKVRLAEKQKIPMILVLGNEEVETEILSIRDREKQAQYKMPLKEFLNMVESKMQEVSF.

Residues 218–509 are catalytic; the sequence is DHRKLGVELG…LSEHFGGNFP (292 aa). Zn(2+) contacts are provided by Cys-310, His-361, and His-486.

It belongs to the class-II aminoacyl-tRNA synthetase family. In terms of assembly, homodimer. Zn(2+) serves as cofactor.

Its subcellular location is the cytoplasm. It carries out the reaction tRNA(Thr) + L-threonine + ATP = L-threonyl-tRNA(Thr) + AMP + diphosphate + H(+). Catalyzes the attachment of threonine to tRNA(Thr) in a two-step reaction: L-threonine is first activated by ATP to form Thr-AMP and then transferred to the acceptor end of tRNA(Thr). Also edits incorrectly charged L-seryl-tRNA(Thr). The chain is Threonine--tRNA ligase from Helicobacter pylori (strain P12).